A 132-amino-acid polypeptide reads, in one-letter code: Phycocyanin PC645 alpha-1 subunit (132 aa).

Asp-54 and Arg-68 together coordinate (2R,3E)-phycocyanobilin. Mesobiliverdin contacts are provided by Cys-70, Gln-76, Tyr-77, and Lys-92. 15,16-dihydrobiliverdin contacts are provided by Pro-123 and Ile-125.

This sequence belongs to the phycoerythrin family. Heterotetramer of 2 different alpha chains and 2 identical beta chains which form 2 alpha-beta heterodimers within the heterotetramer. Post-translationally, contains two phycocyanobilin chromophores, one mesobiliverdin chromophore and one 15,16-dihydrobiliverdin chromophore with binding mediated by both the alpha and beta subunits.

It is found in the plastid. Its subcellular location is the chloroplast thylakoid membrane. Functionally, light-harvesting photosynthetic tetrapyrrole chromophore-protein from the phycobiliprotein complex. This chain is Phycocyanin PC645 alpha-1 subunit, found in Chroomonas sp. (strain CCMP270).